A 508-amino-acid polypeptide reads, in one-letter code: MEEYQDQVYLELDISRQQHFLYPLIFREYIYGLVYGHDFNGSIFSENVDYDNKSSLLIVKRLITRMDQQNHLIISANDSKKKKFLSYNKNLYSQIISEGFAIVVEIPLSLQLNSSSEESKIIKYYKNLRSIHSIFPFFEDKLTYLNYVSDARIPYPIHLEILVQVFRYWAKDAPFFHLLRLFFYEYCNWNNLITPKKSISTFSKSNLRVFLFLYNFYVCEYESIFLFLRNKSSHLRLTSFSVLFERIYFYGKIEHFLEVFAKDFSSTLSFFKELFIHYVRYQEKYILASKNASLLMNKWKNYLIRLWQYHFDVWSQPRTIQINQFSEGSFHLLGYFSNVRLNRSAVRSQMLENSFLIEIVMKKLETIVPIIPLIRSLAKAKFCNVLGHPISKPVWADSSDFHIIDRFLRICRNLSHYYNGSSKKKSLYRVKYILRLSCIKTLARKHKSTVRAFLKRLGSEKLLEEFFTEEEEILSLVFQRASSTLQGFYRGRVWYLDIIFSNDLVNHE.

Belongs to the intron maturase 2 family. MatK subfamily.

The protein resides in the plastid. It localises to the chloroplast. In terms of biological role, usually encoded in the trnK tRNA gene intron. Probably assists in splicing its own and other chloroplast group II introns. The sequence is that of Maturase K from Lupinus cosentinii (West Australian blue lupine).